We begin with the raw amino-acid sequence, 330 residues long: Transcription factor TGA2 (330 aa).

The segment at 1–48 (MADTSPRTDVSTDDDTDHPDLGSEGALVNTAASDSSDRSKGKMDQKTL) is disordered. Basic and acidic residues predominate over residues 35–47 (SSDRSKGKMDQKT). Residues 44–107 (DQKTLRRLAQ…GTGDQAHSTG (64 aa)) enclose the bZIP domain. 2 coiled-coil regions span residues 45–142 (QKTL…HAGD) and 217–244 (INNL…SLAD). Residues 46–66 (KTLRRLAQNREAARKSRLRKK) form a basic motif region. The segment at 72-86 (LENSRLKLTQLEQEL) is leucine-zipper. Residues 111–327 (ALAFDAEHSR…RALSSLWLAR (217 aa)) enclose the DOG1 domain.

Belongs to the bZIP family. Binds DNA as a dimer. Interacts with NPR1, NPR3 and NPR4. Interacts with GRXC7/ROXY1 and GRXC9/GRX480. In terms of tissue distribution, expressed in the whole plant.

Its subcellular location is the nucleus. Functionally, transcriptional activator that binds specifically to the DNA sequence 5'-TGACG-3'. Recognizes ocs elements like the as-1 motif of the cauliflower mosaic virus 35S promoter. Binding to the as-1-like cis elements mediate auxin- and salicylic acid-inducible transcription. Required to induce the systemic acquired resistance (SAR) via the regulation of pathogenesis-related genes expression. Binding to the as-1 element of PR-1 promoter is salicylic acid-inducible and mediated by NPR1. Could also bind to the C-boxes (5'-ATGACGTCAT-3') with high affinity. The chain is Transcription factor TGA2 (TGA2) from Arabidopsis thaliana (Mouse-ear cress).